A 496-amino-acid chain; its full sequence is NAD(P)H-quinone oxidoreductase subunit 2 A, chloroplastic (496 aa).

14 helical membrane-spanning segments follow: residues 13-33 (SILPECILIFSSIGILSIDLL), 41-61 (TFWSYSISLAALAISIIILLL), 83-103 (IFRFFLLICSFLCIPLSVDYI), 110-130 (VTEFLLFVLTATLGGMFLCGA), 133-153 (LISIFVASECLALSSYLLSGY), 168-188 (LLMGGASSSILVYGFSLPYGL), 213-233 (VSIAMIFILVGIGFKLSLVPF), 245-265 (PTPVVAFFSVTSKVAALALAT), 279-299 (WHLPLEILAILSMILGNLIAV), 307-327 (MLAYSSISQIGYILIGIIAGD), 338-358 (YMLIYIFMNLGTFACITSFGL), 380-400 (LSLVLCLLSLGGIPPLAGFFG), 413-435 (LYFLVSIALFTSVISIYYYSRII), and 470-490 (MILCTIASTVPGILINPIIAI).

This sequence belongs to the complex I subunit 2 family. NDH is composed of at least 16 different subunits, 5 of which are encoded in the nucleus.

It localises to the plastid. The protein resides in the chloroplast thylakoid membrane. The enzyme catalyses a plastoquinone + NADH + (n+1) H(+)(in) = a plastoquinol + NAD(+) + n H(+)(out). It carries out the reaction a plastoquinone + NADPH + (n+1) H(+)(in) = a plastoquinol + NADP(+) + n H(+)(out). NDH shuttles electrons from NAD(P)H:plastoquinone, via FMN and iron-sulfur (Fe-S) centers, to quinones in the photosynthetic chain and possibly in a chloroplast respiratory chain. The immediate electron acceptor for the enzyme in this species is believed to be plastoquinone. Couples the redox reaction to proton translocation, and thus conserves the redox energy in a proton gradient. The chain is NAD(P)H-quinone oxidoreductase subunit 2 A, chloroplastic from Psilotum nudum (Whisk fern).